Here is a 121-residue protein sequence, read N- to C-terminus: UPF0045 protein sll0230 (121 aa).

The protein belongs to the UPF0045 family.

This is UPF0045 protein sll0230 from Synechocystis sp. (strain ATCC 27184 / PCC 6803 / Kazusa).